An 80-amino-acid chain; its full sequence is Small ribosomal subunit protein bS18 (80 aa).

The protein belongs to the bacterial ribosomal protein bS18 family. As to quaternary structure, part of the 30S ribosomal subunit. Forms a tight heterodimer with protein bS6.

In terms of biological role, binds as a heterodimer with protein bS6 to the central domain of the 16S rRNA, where it helps stabilize the platform of the 30S subunit. This Staphylococcus saprophyticus subsp. saprophyticus (strain ATCC 15305 / DSM 20229 / NCIMB 8711 / NCTC 7292 / S-41) protein is Small ribosomal subunit protein bS18.